The following is a 457-amino-acid chain: uncharacterized protein (457 aa).

The TRAM domain maps to 5 to 63 (PVKKNDVIEVEIIDLTHEGLGVAKVDHYPLFIENALPGEKLEIKVLKTGKSFGYGKVLT). Q287, Y316, E337, and D385 together coordinate S-adenosyl-L-methionine. C412 functions as the Nucleophile in the catalytic mechanism.

This sequence belongs to the class I-like SAM-binding methyltransferase superfamily. RNA M5U methyltransferase family.

This is an uncharacterized protein from Enterococcus faecalis (strain ATCC 700802 / V583).